The chain runs to 702 residues: Ribosomal RNA large subunit methyltransferase K/L (702 aa).

Positions 43–154 constitute a THUMP domain; the sequence is LIYQSLMWSR…KETASIALDL (112 aa).

This sequence belongs to the methyltransferase superfamily. RlmKL family.

It localises to the cytoplasm. The catalysed reaction is guanosine(2445) in 23S rRNA + S-adenosyl-L-methionine = N(2)-methylguanosine(2445) in 23S rRNA + S-adenosyl-L-homocysteine + H(+). The enzyme catalyses guanosine(2069) in 23S rRNA + S-adenosyl-L-methionine = N(2)-methylguanosine(2069) in 23S rRNA + S-adenosyl-L-homocysteine + H(+). In terms of biological role, specifically methylates the guanine in position 2445 (m2G2445) and the guanine in position 2069 (m7G2069) of 23S rRNA. This chain is Ribosomal RNA large subunit methyltransferase K/L, found in Salmonella agona (strain SL483).